Reading from the N-terminus, the 296-residue chain is uncharacterized protein (296 aa).

CBS domains are found at residues glycine 176–valine 232 and methionine 236–glutamate 292.

This is an uncharacterized protein from Methanocaldococcus jannaschii (strain ATCC 43067 / DSM 2661 / JAL-1 / JCM 10045 / NBRC 100440) (Methanococcus jannaschii).